The following is a 537-amino-acid chain: 2-succinyl-5-enolpyruvyl-6-hydroxy-3-cyclohexene-1-carboxylate synthase (537 aa).

It belongs to the TPP enzyme family. MenD subfamily. In terms of assembly, homodimer. Mg(2+) serves as cofactor. The cofactor is Mn(2+). It depends on thiamine diphosphate as a cofactor.

The enzyme catalyses isochorismate + 2-oxoglutarate + H(+) = 5-enolpyruvoyl-6-hydroxy-2-succinyl-cyclohex-3-ene-1-carboxylate + CO2. The protein operates within quinol/quinone metabolism; 1,4-dihydroxy-2-naphthoate biosynthesis; 1,4-dihydroxy-2-naphthoate from chorismate: step 2/7. Its pathway is quinol/quinone metabolism; menaquinone biosynthesis. Catalyzes the thiamine diphosphate-dependent decarboxylation of 2-oxoglutarate and the subsequent addition of the resulting succinic semialdehyde-thiamine pyrophosphate anion to isochorismate to yield 2-succinyl-5-enolpyruvyl-6-hydroxy-3-cyclohexene-1-carboxylate (SEPHCHC). The sequence is that of 2-succinyl-5-enolpyruvyl-6-hydroxy-3-cyclohexene-1-carboxylate synthase from Nocardioides sp. (strain ATCC BAA-499 / JS614).